The chain runs to 286 residues: Transcription factor egl-46 (286 aa).

Residues 180 to 200 form a C2H2-type 1; atypical zinc finger; that stretch reads CICRLCKVKYEDVFKLAQHKC. 2 consecutive C2H2-type zinc fingers follow at residues 208-230 and 248-271; these read YKCP…RRWH and VSCS…STCQ.

Belongs to the INSM1 family. Interacts (via C-terminus) with egl-44 (via N-terminus); the interaction is direct; the interaction may regulate transcription. As to expression, expressed in touch cells, HSN cells, ventral cord motor neurons and ciliated ray neurons.

The protein resides in the nucleus. Transcription factor. Represses expression of genes involved in differentiation of touch receptor neurons (TRN), probably acting as a heterodimer with egl-44, perhaps by occupying similar cis-regulatory elements as an unc-86/mec-3 heterodimer. Plays a role in cell fate specification of neurons, including the hook neuron HOB, the gas-sensing neuron BAG and touch receptor neurons. Plays a role in neuron differentiation by repressing the expression of zag-1 in FLP neurons, probably acting as a heterodimer with egl-44; because zag-1 represses expression of egl-46 and egl-44, together these proteins form a bistable, negative-feedback loop that regulates the choice between neuronal fates. Acts downstream of egl-44 to prevent touch cell differentiation in FLP neurons. Involved in male mating behavior, acting in concert with egl-44, via modulation of expression of polycystins lov-1 and pkd-2, homeodomain protein ceh-26, and neuropeptide-like protein nlp-8. Modulates the expression of a subset of terminal differentiation genes involved in O(2)- and CO(2)-sensing, acting in parallel to ets-5 and egl-13. May act upstream of RFX transcription factor daf-19 to regulate gene expression specifically in the HOB neuron. Plays a role in specifying commissural dendrites of the PVD nociceptive neurons, acting in concert with egl-44. In association with egl-44, regulates cell cycle exit in the neuronal Q cell lineage. In Caenorhabditis elegans, this protein is Transcription factor egl-46.